The sequence spans 325 residues: Elongation factor P--(R)-beta-lysine ligase (325 aa).

76 to 78 (SPE) is a substrate binding site. Residues 100–102 (RNE) and Asn-109 each bind ATP. Substrate is bound at residue Tyr-118. 244 to 245 (EL) contacts ATP. Glu-251 contributes to the substrate binding site. ATP is bound at residue Gly-300.

This sequence belongs to the class-II aminoacyl-tRNA synthetase family. EpmA subfamily. As to quaternary structure, homodimer.

The catalysed reaction is D-beta-lysine + L-lysyl-[protein] + ATP = N(6)-((3R)-3,6-diaminohexanoyl)-L-lysyl-[protein] + AMP + diphosphate + H(+). With EpmB is involved in the beta-lysylation step of the post-translational modification of translation elongation factor P (EF-P) on 'Lys-34'. Catalyzes the ATP-dependent activation of (R)-beta-lysine produced by EpmB, forming a lysyl-adenylate, from which the beta-lysyl moiety is then transferred to the epsilon-amino group of EF-P 'Lys-34'. This is Elongation factor P--(R)-beta-lysine ligase from Escherichia coli O139:H28 (strain E24377A / ETEC).